The sequence spans 343 residues: Dehydrodolichyl diphosphate synthase complex subunit SRT1 (343 aa).

The protein belongs to the UPP synthase family. As to quaternary structure, forms an active dehydrodolichyl diphosphate synthase complex with NUS1. The cofactor is Mg(2+).

Its subcellular location is the lipid droplet. The enzyme catalyses n isopentenyl diphosphate + (2E,6E)-farnesyl diphosphate = a di-trans,poly-cis-polyprenyl diphosphate + n diphosphate. Its pathway is protein modification; protein glycosylation. With NUS1, forms the dehydrodolichyl diphosphate synthase (DDS) complex, an essential component of the dolichol monophosphate (Dol-P) biosynthetic machinery. Adds multiple copies of isopentenyl pyrophosphate (IPP) to farnesyl pyrophosphate (FPP) to produce dehydrodolichyl diphosphate (Dedol-PP), a precursor of dolichol which is utilized as a sugar carrier in protein glycosylation in the endoplasmic reticulum (ER). In Saccharomyces cerevisiae (strain ATCC 204508 / S288c) (Baker's yeast), this protein is Dehydrodolichyl diphosphate synthase complex subunit SRT1.